The primary structure comprises 339 residues: DNA-directed RNA polymerase subunit alpha (339 aa).

An alpha N-terminal domain (alpha-NTD) region spans residues 1–233 (MVREEVAGST…DLFLPFLHAE (233 aa)). The interval 264-339 (KKGIPLNCIF…IDLLKNKLSF (76 aa)) is alpha C-terminal domain (alpha-CTD).

This sequence belongs to the RNA polymerase alpha chain family. In terms of assembly, in plastids the minimal PEP RNA polymerase catalytic core is composed of four subunits: alpha, beta, beta', and beta''. When a (nuclear-encoded) sigma factor is associated with the core the holoenzyme is formed, which can initiate transcription.

Its subcellular location is the plastid. The protein resides in the chloroplast. The catalysed reaction is RNA(n) + a ribonucleoside 5'-triphosphate = RNA(n+1) + diphosphate. In terms of biological role, DNA-dependent RNA polymerase catalyzes the transcription of DNA into RNA using the four ribonucleoside triphosphates as substrates. The sequence is that of DNA-directed RNA polymerase subunit alpha from Psathyrostachys fragilis (Russian wild rye).